Here is a 166-residue protein sequence, read N- to C-terminus: Stress response protein NhaX (166 aa).

This sequence belongs to the universal stress protein A family.

The sequence is that of Stress response protein NhaX (nhaX) from Bacillus subtilis (strain 168).